The following is a 96-amino-acid chain: Small ribosomal subunit protein bS6 (96 aa).

This sequence belongs to the bacterial ribosomal protein bS6 family.

In terms of biological role, binds together with bS18 to 16S ribosomal RNA. This is Small ribosomal subunit protein bS6 from Streptococcus suis (strain 98HAH33).